The primary structure comprises 606 residues: uncharacterized protein (606 aa).

This is an uncharacterized protein from Sinorhizobium fredii (strain NBRC 101917 / NGR234).